Consider the following 377-residue polypeptide: Succinyl-diaminopimelate desuccinylase (377 aa).

His-66 serves as a coordination point for Zn(2+). The active site involves Asp-68. Position 99 (Asp-99) interacts with Zn(2+). Catalysis depends on Glu-133, which acts as the Proton acceptor. Zn(2+)-binding residues include Glu-134, Glu-162, and His-348.

Belongs to the peptidase M20A family. DapE subfamily. As to quaternary structure, homodimer. Requires Zn(2+) as cofactor. Co(2+) serves as cofactor.

It catalyses the reaction N-succinyl-(2S,6S)-2,6-diaminopimelate + H2O = (2S,6S)-2,6-diaminopimelate + succinate. It functions in the pathway amino-acid biosynthesis; L-lysine biosynthesis via DAP pathway; LL-2,6-diaminopimelate from (S)-tetrahydrodipicolinate (succinylase route): step 3/3. In terms of biological role, catalyzes the hydrolysis of N-succinyl-L,L-diaminopimelic acid (SDAP), forming succinate and LL-2,6-diaminopimelate (DAP), an intermediate involved in the bacterial biosynthesis of lysine and meso-diaminopimelic acid, an essential component of bacterial cell walls. The sequence is that of Succinyl-diaminopimelate desuccinylase from Alcanivorax borkumensis (strain ATCC 700651 / DSM 11573 / NCIMB 13689 / SK2).